The primary structure comprises 122 residues: Large ribosomal subunit protein uL14 (122 aa).

It belongs to the universal ribosomal protein uL14 family. Part of the 50S ribosomal subunit. Forms a cluster with proteins L3 and L19. In the 70S ribosome, L14 and L19 interact and together make contacts with the 16S rRNA in bridges B5 and B8.

In terms of biological role, binds to 23S rRNA. Forms part of two intersubunit bridges in the 70S ribosome. The chain is Large ribosomal subunit protein uL14 from Roseiflexus castenholzii (strain DSM 13941 / HLO8).